We begin with the raw amino-acid sequence, 116 residues long: Small ribosomal subunit protein bS18c (116 aa).

The segment covering 1–13 has biased composition (polar residues); sequence MKPSFRNTSPSFR. Residues 1–51 form a disordered region; sequence MKPSFRNTSPSFRNRSKPYFRNRSKPYFRNRSKPSFRNTSKRFSPNQQSFR. Residues 14–34 show a composition bias toward basic residues; the sequence is NRSKPYFRNRSKPYFRNRSKP. Residues 35–49 are compositionally biased toward polar residues; the sequence is SFRNTSKRFSPNQQS.

This sequence belongs to the bacterial ribosomal protein bS18 family. Part of the 30S ribosomal subunit.

It is found in the plastid. The protein localises to the chloroplast. The chain is Small ribosomal subunit protein bS18c from Cryptomeria japonica (Japanese cedar).